The primary structure comprises 100 residues: Urease subunit gamma (100 aa).

The protein belongs to the urease gamma subunit family. In terms of assembly, heterotrimer of UreA (gamma), UreB (beta) and UreC (alpha) subunits. Three heterotrimers associate to form the active enzyme.

The protein localises to the cytoplasm. The catalysed reaction is urea + 2 H2O + H(+) = hydrogencarbonate + 2 NH4(+). The protein operates within nitrogen metabolism; urea degradation; CO(2) and NH(3) from urea (urease route): step 1/1. In Ruegeria pomeroyi (strain ATCC 700808 / DSM 15171 / DSS-3) (Silicibacter pomeroyi), this protein is Urease subunit gamma.